The sequence spans 397 residues: L-rhamnonate dehydratase (397 aa).

Residues His-25 and Arg-51 each coordinate substrate. Mg(2+) is bound by residues Asp-217, Glu-243, and Glu-271. His-321 functions as the Proton acceptor in the catalytic mechanism. Position 341 (Glu-341) interacts with substrate.

Belongs to the mandelate racemase/muconate lactonizing enzyme family. RhamD subfamily. Homooctamer; tetramer of dimers. Mg(2+) serves as cofactor.

It carries out the reaction L-rhamnonate = 2-dehydro-3-deoxy-L-rhamnonate + H2O. The protein operates within carbohydrate degradation; L-rhamnose degradation. Catalyzes the dehydration of L-rhamnonate to 2-keto-3-deoxy-L-rhamnonate (KDR). Also shows activity with L-lyxonate and L-mannonate, with much lower catalytic efficiency. Catalyzes the third step in an alternative pathway for rhamnose utilization that does not involve phosphorylated intermediates. This is L-rhamnonate dehydratase from Sphingomonas sp. (strain SKA58).